We begin with the raw amino-acid sequence, 752 residues long: MAP/microtubule affinity-regulating kinase 4 (752 aa).

Positions 1–36 (MSSRTVLAPGNDRNSDTHGTLGSGRSSDKGPSWSSR) are disordered. The Protein kinase domain maps to 59-310 (YRLLRTIGKG…LEQIMKDKWI (252 aa)). ATP-binding positions include 65-73 (IGKGNFAKV) and K88. D181 serves as the catalytic Proton acceptor. T214 is subject to Phosphothreonine; by LKB1. Residues 324–368 (EPEEDFGDTKRIEVMVGMGYTREEIKESLTSQKYNEVTATYLLLG) enclose the UBA domain. The interval 385–614 (ARVRAPSDTT…PAGRPRPTTN (230 aa)) is disordered. Positions 391-406 (SDTTNGTSSSKGTSHS) are enriched in low complexity. Phosphoserine occurs at positions 423 and 543. A compositionally biased stretch (low complexity) spans 544 to 553 (PSSHSLAPPS). One can recognise a KA1 domain in the interval 703–752 (AGGPEPLSHFEVEVCQLPRPGLRGVLFRRVAGTALAFRTLVTRISNDLEL).

It belongs to the protein kinase superfamily. CAMK Ser/Thr protein kinase family. SNF1 subfamily. Interacts with MAPT/TAU. Interacts with gamma-tubulin. Interacts with ODF2. Interacts with USP9X. Interacts with YWHAQ. Interacts with NLRP3; promoting NLRP3 recruitment to microtubule organizing center (MTOC). Requires Mg(2+) as cofactor. Post-translationally, ubiquitinated with 'Lys-29'- and 'Lys-33'-linked polyubiquitins which appear to impede LKB1-mediated phosphorylation. Deubiquitinated by USP9X. Phosphorylated at Thr-214 by STK11/LKB1 in complex with STE20-related adapter-alpha (STRADA) pseudo kinase and CAB39. Phosphorylated throughout the cell cycle. As to expression, ubiquitous. Isoform 2 is brain-specific. Expressed at highest levels in brain and testis. Also expressed in heart, lung, liver, muscle, kidney and spleen.

Its subcellular location is the cytoplasm. The protein localises to the cytoskeleton. The protein resides in the microtubule organizing center. It is found in the centrosome. It localises to the cilium basal body. Its subcellular location is the cilium axoneme. The protein localises to the cell projection. The protein resides in the dendrite. The catalysed reaction is L-seryl-[protein] + ATP = O-phospho-L-seryl-[protein] + ADP + H(+). It carries out the reaction L-threonyl-[protein] + ATP = O-phospho-L-threonyl-[protein] + ADP + H(+). Its activity is regulated as follows. Activated by phosphorylation on Thr-214. In terms of biological role, serine/threonine-protein kinase. Phosphorylates the microtubule-associated protein MAPT/TAU. Also phosphorylates the microtubule-associated proteins MAP2 and MAP4. Involved in regulation of the microtubule network, causing reorganization of microtubules into bundles. Required for the initiation of axoneme extension during cilium assembly. Regulates the centrosomal location of ODF2 and phosphorylates ODF2 in vitro. Plays a role in cell cycle progression, specifically in the G1/S checkpoint. Reduces neuronal cell survival. Plays a role in energy homeostasis by regulating satiety and metabolic rate. Promotes adipogenesis by activating JNK1 and inhibiting the p38MAPK pathway, and triggers apoptosis by activating the JNK1 pathway. Phosphorylates mTORC1 complex member RPTOR and acts as a negative regulator of the mTORC1 complex, probably due to disruption of the interaction between phosphorylated RPTOR and the RRAGA/RRAGC heterodimer which is required for mTORC1 activation. Involved in NLRP3 positioning along microtubules by mediating NLRP3 recruitment to microtubule organizing center (MTOC) upon inflammasome activation. This chain is MAP/microtubule affinity-regulating kinase 4, found in Homo sapiens (Human).